We begin with the raw amino-acid sequence, 543 residues long: Telomerase Cajal body protein 1 homolog (543 aa).

Positions glycine 95–serine 128 are disordered. The span at alanine 116–glutamate 127 shows a compositional bias: acidic residues. WD repeat units lie at residues proline 237–serine 283, aspartate 291–aspartate 329, and glycine 378–valine 421.

Belongs to the TCAB1 family.

Its subcellular location is the nucleus. It is found in the cajal body. Its function is as follows. RNA chaperone that plays a key role in Cajal body formation. Specifically recognizes and binds the Cajal body box (CAB box) present in both small Cajal body RNAs (scaRNAs). Probably acts by mediating localization of scaRNAs to Cajal bodies. This chain is Telomerase Cajal body protein 1 homolog, found in Drosophila melanogaster (Fruit fly).